The sequence spans 250 residues: 5'-nucleotidase SurE (250 aa).

Positions 8, 9, 40, and 94 each coordinate a divalent metal cation.

It belongs to the SurE nucleotidase family. The cofactor is a divalent metal cation.

Its subcellular location is the cytoplasm. The enzyme catalyses a ribonucleoside 5'-phosphate + H2O = a ribonucleoside + phosphate. Functionally, nucleotidase that shows phosphatase activity on nucleoside 5'-monophosphates. This chain is 5'-nucleotidase SurE, found in Wolbachia sp. subsp. Drosophila simulans (strain wRi).